The sequence spans 444 residues: MSSSYINVIGAGLAGSEAAYQIAKRGIPVKLYEMRGVKSTPQHKTADFAELVCSNSLRGDALTNAVGLLKEEMRRLDSVILKSAEATRVPAGGALAVDREGFSQMVTELVTNHPLIEVIREEITEIPEDAITVIATGPLTSDALAEKIHALNGGDGFYFYDAAAPIIDVNTIDMTKVYLKSRYDKGEAAYLNAPMTKQEFMDFHDALVNAEEAPLNSFEKEKYFEGCMPIEVMAKRGIKTMLYGPMKPVGLEYPDDYQGPRDGEYKTPYAVVQLRQDNAAGSLYNIVGFQTHLKWGEQKRVFQMIPGLENAEFVRYGVMHRNSYMDSPNLLEQTFRSKKLPNLFFAGQMTGVEGYVESAASGLVAGINAARLFKGEEALVFPETTAIGSLPHYVTHADSKHFQPMNVNFGIIKELDGPRIRDKKERYEKIAERALQDLQPYLDK.

An FAD-binding site is contributed by 10 to 15; that stretch reads GAGLAG.

It belongs to the MnmG family. TrmFO subfamily. FAD serves as cofactor.

The protein resides in the cytoplasm. The enzyme catalyses uridine(54) in tRNA + (6R)-5,10-methylene-5,6,7,8-tetrahydrofolate + NADH + H(+) = 5-methyluridine(54) in tRNA + (6S)-5,6,7,8-tetrahydrofolate + NAD(+). It catalyses the reaction uridine(54) in tRNA + (6R)-5,10-methylene-5,6,7,8-tetrahydrofolate + NADPH + H(+) = 5-methyluridine(54) in tRNA + (6S)-5,6,7,8-tetrahydrofolate + NADP(+). Its function is as follows. Catalyzes the folate-dependent formation of 5-methyl-uridine at position 54 (M-5-U54) in all tRNAs. The protein is Methylenetetrahydrofolate--tRNA-(uracil-5-)-methyltransferase TrmFO of Streptococcus sanguinis (strain SK36).